The primary structure comprises 338 residues: MARKLFTPWTVKDVTIKNRIVMAPMCMYSSHEKDGKLQPFHMAHYISRAIGQVGLIIVEATAVNPQGRISDQDLGIWSDDHIEGFAKLTEQVKAQGSKIGIQLAHAGRKAELEGDIYAPSAIPFDEQSKTPAEMTTEQIKETIQEFKQAAARAKEAGFDIIELHAAHGYLMHEFLSPLSNHRTDEYGGSHENRYRFLGETIEAVKEVWDGPLFVRISASDYTDKGLDIADHIGFAKWMKEQGVDLIDCSSGALVQADINVFPGYQVSFAEKIREQAEIATGAVGLITTGTMAEEILQNNRADLIFVARELLRDPHFARSAAKQLNTEIPSPVQYDRAW.

Tyrosine 28 lines the substrate pocket. Positions 60 and 102 each coordinate FMN. A substrate-binding site is contributed by 164-167; sequence HAAH. FMN-binding positions include arginine 215 and 307–308; that span reads AR.

The protein belongs to the NADH:flavin oxidoreductase/NADH oxidase family. NamA subfamily. Homotetramer. FMN is required as a cofactor.

It carries out the reaction A + NADPH + H(+) = AH2 + NADP(+). Catalyzes the reduction of the double bond of an array of alpha,beta-unsaturated aldehydes and ketones. It also reduces the nitro group of nitroester and nitroaromatic compounds. It could have a role in detoxification processes. This is NADPH dehydrogenase from Bacillus velezensis (strain DSM 23117 / BGSC 10A6 / LMG 26770 / FZB42) (Bacillus amyloliquefaciens subsp. plantarum).